A 192-amino-acid chain; its full sequence is Erythropoietin (192 aa).

A signal peptide spans 1-25 (MGARDCTPLLMLSFLLFPLGFPVLG). 2 disulfides stabilise this stretch: Cys-32–Cys-187 and Cys-54–Cys-58. N-linked (GlcNAc...) asparagine glycosylation occurs at Asn-49. N-linked (GlcNAc...) asparagine glycosylation is found at Asn-63 and Asn-108.

Belongs to the EPO/TPO family. Produced by kidney or liver of adult mammals and by liver of fetal or neonatal mammals.

It localises to the secreted. Functionally, hormone involved in the regulation of erythrocyte proliferation and differentiation and the maintenance of a physiological level of circulating erythrocyte mass. Binds to EPOR leading to EPOR dimerization and JAK2 activation thereby activating specific downstream effectors, including STAT1 and STAT3. The polypeptide is Erythropoietin (EPO) (Bos taurus (Bovine)).